The primary structure comprises 579 residues: Matrix metalloproteinase-C (579 aa).

The N-terminal stretch at 1 to 17 (MRLIYVIAILLVSTCQA) is a signal peptide. The propeptide at 18-129 (GFFSSLVSRF…SRCGVTDAPL (112 aa)) is activation peptide. Residues 32–51 (NSSPSSSSSSSSFSNSRKPS) form a disordered region. The span at 33 to 50 (SSPSSSSSSSSFSNSRKP) shows a compositional bias: low complexity. The short motif at 120-127 (SRCGVTDA) is the Cysteine switch element. Zn(2+) is bound by residues Cys-122, His-200, Asp-202, His-215, and His-225. The N-linked (GlcNAc...) asparagine glycan is linked to Asn-231. Zn(2+) is bound at residue His-254. The active site involves Glu-255. Residues His-258 and His-264 each coordinate Zn(2+). The tract at residues 307–394 (SGRSSSGSDF…SSSGSSGGGC (88 aa)) is disordered. The segment covering 315 to 324 (DFGGSSGGGS) has biased composition (gly residues). The segment covering 325–341 (RTTARPTTTTRSWFGRF) has biased composition (low complexity). The span at 373 to 394 (WGSGSGSSGRGGSSSGSSGGGC) shows a compositional bias: gly residues. 2 Hemopexin repeats span residues 395 to 437 (PSHI…FPSA) and 438 to 490 (PTPV…LGFS).

It belongs to the peptidase M10A family. Zn(2+) is required as a cofactor.

Its subcellular location is the secreted. The protein localises to the extracellular space. It localises to the extracellular matrix. Inhibited by human TIMP1 and TIMP2 and the broad MMP inhibitors BB94 (Batimastat) and CT543. Functionally, metalloproteinase. In Caenorhabditis elegans, this protein is Matrix metalloproteinase-C.